Here is a 666-residue protein sequence, read N- to C-terminus: MFMYPEFARKALSKLISKKLNIEKVSSKHQLVLLDYGLHGLLPKSLYLEAINSDILNVRFFPPEIINVTDIVKALQNSCRVDEYLKSVSLYHKNSLMVSGPNVVKLMIEYNLLTHSDLEWLINENVVKATYLLKINAYMINFKIDLTVDEIIDLVKDIPVGATLHLYNILNNIDLDIVLRISDEYNIPPVHDILSKLTDEEMCIKLVTKYPMDNVINFINQDVRYSPTFIKTIKDFVNEHLPTMYDGLNDYLHSVIIDEDLIEEYKIKSVAMFNLEYKTDVNTLTLDEQIFVEVNISYYDFRYRQFADEFRDYIMIKERRQITMQSGDRIRRFRRPMSLRSTIIKKDTDSLEDILAHIDNARKNSKVSIEDVERIISSFRLNPCVVRRTMLSDIDIKTKIMVLKIVKDWKSCALTLSAIKGIMVTDTINTVLSKILHHHRNVFKYLTSVENKEIAVCNCSRCLSLFYRELKSVRCDLHTDDGLLDRLYDLTRYALHGKINQNLIGQRCWGPLTEMLFNENKKKKLNNLMEYIKISDMLVYGHSIEKTLIPITDSLSFKLSVDTMSVLNDQYAKVVIFFNTIIEYIIATIYYRLTVLNNYTNVKHFVSKVLHTVMEACGVLFSYIKVNDKIEHELEEMVDKGTVPSYLYHLSINVISIILDDINGTR.

The chain crosses the membrane as a helical span at residues valine 574–leucine 596.

It belongs to the orthopoxvirus OPG074 family.

It is found in the membrane. This chain is Protein OPG074 (OPG074), found in Vaccinia virus (strain Western Reserve) (VACV).